The following is a 520-amino-acid chain: Peptide chain release factor 3 (520 aa).

Positions 8 to 277 constitute a tr-type G domain; that stretch reads ESRKTFAIIS…HAPMPNARQT (270 aa). Residues 17-24, 85-89, and 139-142 contribute to the GTP site; these read SHPDAGKT, DTPGH, and NKLD.

The protein belongs to the TRAFAC class translation factor GTPase superfamily. Classic translation factor GTPase family. PrfC subfamily.

The protein localises to the cytoplasm. Functionally, increases the formation of ribosomal termination complexes and stimulates activities of RF-1 and RF-2. It binds guanine nucleotides and has strong preference for UGA stop codons. It may interact directly with the ribosome. The stimulation of RF-1 and RF-2 is significantly reduced by GTP and GDP, but not by GMP. This chain is Peptide chain release factor 3, found in Staphylococcus epidermidis (strain ATCC 35984 / DSM 28319 / BCRC 17069 / CCUG 31568 / BM 3577 / RP62A).